We begin with the raw amino-acid sequence, 150 residues long: Small heat shock protein IbpB (150 aa).

A sHSP domain is found at 26-137 (SQEPIDFPPY…QPQRIAIGGG (112 aa)).

This sequence belongs to the small heat shock protein (HSP20) family. As to quaternary structure, homodimer. Forms homomultimers of about 100-150 subunits at optimal growth temperatures. Conformation changes to oligomers at high temperatures or high ionic concentrations. The decrease in size of the multimers is accompanied by an increase in chaperone activity.

The protein resides in the cytoplasm. Functionally, associates with aggregated proteins, together with IbpA, to stabilize and protect them from irreversible denaturation and extensive proteolysis during heat shock and oxidative stress. Aggregated proteins bound to the IbpAB complex are more efficiently refolded and reactivated by the ATP-dependent chaperone systems ClpB and DnaK/DnaJ/GrpE. Its activity is ATP-independent. This is Small heat shock protein IbpB from Pectobacterium atrosepticum (strain SCRI 1043 / ATCC BAA-672) (Erwinia carotovora subsp. atroseptica).